The following is a 298-amino-acid chain: Lipoyl synthase 1 (298 aa).

[4Fe-4S] cluster is bound by residues Cys-34, Cys-39, Cys-45, Cys-60, Cys-64, Cys-67, and Ser-274. The region spanning 46–263 (FKAGTATFLI…RRAGEGMGFL (218 aa)) is the Radical SAM core domain. The interval 277 to 298 (AEQVQRLMRSHPRTPKNQHSPE) is disordered.

It belongs to the radical SAM superfamily. Lipoyl synthase family. [4Fe-4S] cluster is required as a cofactor.

The protein resides in the cytoplasm. It carries out the reaction [[Fe-S] cluster scaffold protein carrying a second [4Fe-4S](2+) cluster] + N(6)-octanoyl-L-lysyl-[protein] + 2 oxidized [2Fe-2S]-[ferredoxin] + 2 S-adenosyl-L-methionine + 4 H(+) = [[Fe-S] cluster scaffold protein] + N(6)-[(R)-dihydrolipoyl]-L-lysyl-[protein] + 4 Fe(3+) + 2 hydrogen sulfide + 2 5'-deoxyadenosine + 2 L-methionine + 2 reduced [2Fe-2S]-[ferredoxin]. Its pathway is protein modification; protein lipoylation via endogenous pathway; protein N(6)-(lipoyl)lysine from octanoyl-[acyl-carrier-protein]: step 2/2. Its function is as follows. Catalyzes the radical-mediated insertion of two sulfur atoms into the C-6 and C-8 positions of the octanoyl moiety bound to the lipoyl domains of lipoate-dependent enzymes, thereby converting the octanoylated domains into lipoylated derivatives. In Gloeobacter violaceus (strain ATCC 29082 / PCC 7421), this protein is Lipoyl synthase 1.